A 1096-amino-acid chain; its full sequence is Pentatricopeptide repeat-containing protein At5g55840 (1096 aa).

PPR repeat units lie at residues N122–P156, S157–P191, D192–P226, T227–A261, D262–P296, N297–P331, N332–P366, S367–V401, G402–P436, D437–P471, N472–R506, D507–P541, N542–P576, T577–V607, D612–P646, D647–L681, N683–P717, D718–P752, N753–P787, D788–V822, D823–L857, D858–P892, E893–P927, P928–P962, T963–L997, D998–A1032, and N1033–T1068.

It belongs to the PPR family. P subfamily.

This Arabidopsis thaliana (Mouse-ear cress) protein is Pentatricopeptide repeat-containing protein At5g55840.